The sequence spans 132 residues: D-ribose pyranase (132 aa).

The Proton donor role is filled by His-20. Residues Asp-28, His-99, and 121–123 (YAN) each bind substrate.

The protein belongs to the RbsD / FucU family. RbsD subfamily. As to quaternary structure, homodecamer.

It localises to the cytoplasm. It catalyses the reaction beta-D-ribopyranose = beta-D-ribofuranose. Its pathway is carbohydrate metabolism; D-ribose degradation; D-ribose 5-phosphate from beta-D-ribopyranose: step 1/2. In terms of biological role, catalyzes the interconversion of beta-pyran and beta-furan forms of D-ribose. This chain is D-ribose pyranase, found in Variovorax paradoxus (strain S110).